A 148-amino-acid polypeptide reads, in one-letter code: Succinate dehydrogenase assembly factor 3, mitochondrial (148 aa).

A mitochondrion-targeting transit peptide spans 1 to 12 (MYALRPTLRRSA). Positions 129–148 (RGTEGDLEDGDGGESGQKSQ) are disordered.

The protein belongs to the complex I LYR family. SDHAF3 subfamily. As to quaternary structure, interacts with the iron-sulfur protein subunit within the SDH catalytic dimer.

It localises to the mitochondrion matrix. Functionally, plays an essential role in the assembly of succinate dehydrogenase (SDH), an enzyme complex (also referred to as respiratory complex II) that is a component of both the tricarboxylic acid (TCA) cycle and the mitochondrial electron transport chain, and which couples the oxidation of succinate to fumarate with the reduction of ubiquinone (coenzyme Q) to ubiquinol. Promotes maturation of the iron-sulfur protein subunit of the SDH catalytic dimer, protecting it from the deleterious effects of oxidants. May act together with SDHAF1. The polypeptide is Succinate dehydrogenase assembly factor 3, mitochondrial (Neurospora crassa (strain ATCC 24698 / 74-OR23-1A / CBS 708.71 / DSM 1257 / FGSC 987)).